Consider the following 345-residue polypeptide: MLKVAINGFGRIGRNVLRAVYESGKHQQIKVVAVNELAQPEAMAHLLQYDTSHGRFGKKISHDQEHLYVHHDSSEYDPIRILHLAEIELLPWRDLEVDIVLDCTGVFGSQADGQAHIEAGAQKVLFSHPGASDLDNTIIYGVNHETLKDEHRVVSNGSCTTNCIVPIIKVLDEAFGIESGTITTIHSSMNDQQVIDAYHNDLRRTRAASQSIIPVDTKLHKGIERIFPKFSNKFEAISVRVPTVNVTAMDLSVTISTNVKVNDVNQTIVNASQCTLRDIVDYTESPLVSIDFNHDPHSAIVDGTQTRVSNGQLVKMLVWCDNEWGFANRMLDTALAMQASSQVEQ.

11 to 12 (RI) provides a ligand contact to NAD(+). Residues 158–160 (SCT), Arg-204, 217–218 (TK), and Arg-240 each bind substrate. Cys-159 functions as the Nucleophile in the catalytic mechanism. NAD(+) is bound at residue Asn-322.

It belongs to the glyceraldehyde-3-phosphate dehydrogenase family. Epd subfamily. Homotetramer.

It localises to the cytoplasm. It carries out the reaction D-erythrose 4-phosphate + NAD(+) + H2O = 4-phospho-D-erythronate + NADH + 2 H(+). It participates in cofactor biosynthesis; pyridoxine 5'-phosphate biosynthesis; pyridoxine 5'-phosphate from D-erythrose 4-phosphate: step 1/5. Functionally, catalyzes the NAD-dependent conversion of D-erythrose 4-phosphate to 4-phosphoerythronate. The protein is D-erythrose-4-phosphate dehydrogenase of Vibrio campbellii (strain ATCC BAA-1116).